The sequence spans 1649 residues: Formin-like protein 20 (1649 aa).

Positions 1–194 constitute a Phosphatase tensin-type domain; it reads MALFRRFFYK…QYISRRNLGS (194 aa). The Phosphocysteine intermediate role is filled by cysteine 127. The C2 tensin-type domain occupies 200–339; the sequence is DTPLLLDCLI…FKAEVLFSGA (140 aa). Disordered stretches follow at residues 416 to 774 and 787 to 1245; these read DCAS…PWKS and STSQ…QKKS. A compositionally biased stretch (basic and acidic residues) spans 421-483; the sequence is DSNHKHDMHA…RRTVEAKEND (63 aa). Composition is skewed to polar residues over residues 500–513 and 585–597; these read LESMSQKTNTSLNK and RINSAPASITTSL. Positions 598–616 are enriched in basic and acidic residues; sequence KDGKRATSPDGVIPKDAKT. Over residues 648-662 the composition is skewed to pro residues; that stretch reads SLPPASPHQAPPPLP. Positions 665–678 are enriched in polar residues; that stretch reads TSEAKTVLHSSQAV. 5 stretches are compositionally biased toward pro residues: residues 680 to 691, 701 to 711, 722 to 732, 743 to 752, and 795 to 804; these read SPPPPPPPPPLP, LPPPPPPPPPF, LPPPPPPPLP, and SPTPPPPPPA. Residues 809 to 820 are compositionally biased toward polar residues; that stretch reads GQKSSDLQTSQL. 3 stretches are compositionally biased toward pro residues: residues 821 to 832, 843 to 854, and 865 to 874; these read PSPPPPPPPPPF, LPPPPPPPPPPF, and LPPPPPPPPW. Over residues 878–890 the composition is skewed to polar residues; that stretch reads YASTFETHEACST. Composition is skewed to pro residues over residues 893–904, 944–960, and 968–1213; these read SPPPPPPPPPFS, PSPPVKTAPPPPPPPPF, and SPPP…PPPM. The region spanning 1237–1635 is the FH2 domain; the sequence is FGSAAQKKSS…KALKEAEMEK (399 aa).

The protein belongs to the formin-like family. Class-II subfamily.

The sequence is that of Formin-like protein 20 (FH20) from Arabidopsis thaliana (Mouse-ear cress).